Consider the following 476-residue polypeptide: GTPase Der (476 aa).

EngA-type G domains are found at residues 3–167 (FTVA…GEER) and 205–380 (LRVA…KVWN). GTP is bound by residues 9-16 (GRPNVGKS), 56-60 (DTAGL), 119-122 (NKSE), 211-218 (GRPNAGKS), 258-262 (DTAGM), and 323-326 (NKWD). The KH-like domain maps to 381–465 (RRISTARLNR…PIRVHFRASE (85 aa)).

The protein belongs to the TRAFAC class TrmE-Era-EngA-EngB-Septin-like GTPase superfamily. EngA (Der) GTPase family. In terms of assembly, associates with the 50S ribosomal subunit.

Functionally, GTPase that plays an essential role in the late steps of ribosome biogenesis. In Rhizobium meliloti (strain 1021) (Ensifer meliloti), this protein is GTPase Der.